The chain runs to 96 residues: DNA-binding protein HmvA (96 aa).

Residues 52–55 (KTIK) form an interaction with DNA region.

It belongs to the archaeal histone HMF family. As to quaternary structure, homodimer. Dimers then assemble into higher oligomers, with the DNA wrapped around the protein core.

It is found in the cytoplasm. It localises to the chromosome. Functionally, binds and compact DNA (95 to 150 base pairs) to form nucleosome-like structures that contain positive DNA supercoils. Increases the resistance of DNA to thermal denaturation (in vitro). The sequence is that of DNA-binding protein HmvA (hmvA) from Methanocaldococcus jannaschii (strain ATCC 43067 / DSM 2661 / JAL-1 / JCM 10045 / NBRC 100440) (Methanococcus jannaschii).